The sequence spans 174 residues: Co-chaperone protein HscB (174 aa).

Residues 2–74 (DYFTLFGLPA…LKRAEYMLSL (73 aa)) enclose the J domain.

It belongs to the HscB family. As to quaternary structure, interacts with HscA and stimulates its ATPase activity. Interacts with IscU.

In terms of biological role, co-chaperone involved in the maturation of iron-sulfur cluster-containing proteins. Seems to help targeting proteins to be folded toward HscA. This is Co-chaperone protein HscB from Yersinia pestis bv. Antiqua (strain Antiqua).